We begin with the raw amino-acid sequence, 147 residues long: MLMPKRVKHRKVQRGRMKGKATRGNFIAYGDYGIQATECGWITSNQIESARIAINRYIRRGGKLWIKIFPDKPVTQKPAETRMGSGKGTPEYWVAVVKPGRVLFELTGVDEETAREAMRLAAHKLPVKTKFVKKSDFEEVGGEINEG.

It belongs to the universal ribosomal protein uL16 family. Part of the 50S ribosomal subunit.

In terms of biological role, binds 23S rRNA and is also seen to make contacts with the A and possibly P site tRNAs. The chain is Large ribosomal subunit protein uL16 from Clostridium tetani (strain Massachusetts / E88).